We begin with the raw amino-acid sequence, 236 residues long: Aspartate/glutamate leucyltransferase (236 aa).

Belongs to the R-transferase family. Bpt subfamily.

The protein localises to the cytoplasm. The enzyme catalyses N-terminal L-glutamyl-[protein] + L-leucyl-tRNA(Leu) = N-terminal L-leucyl-L-glutamyl-[protein] + tRNA(Leu) + H(+). It catalyses the reaction N-terminal L-aspartyl-[protein] + L-leucyl-tRNA(Leu) = N-terminal L-leucyl-L-aspartyl-[protein] + tRNA(Leu) + H(+). Its function is as follows. Functions in the N-end rule pathway of protein degradation where it conjugates Leu from its aminoacyl-tRNA to the N-termini of proteins containing an N-terminal aspartate or glutamate. The protein is Aspartate/glutamate leucyltransferase of Halorhodospira halophila (strain DSM 244 / SL1) (Ectothiorhodospira halophila (strain DSM 244 / SL1)).